A 119-amino-acid chain; its full sequence is Probable cyclase otaY (119 aa).

It belongs to the aurE cyclase family.

Its pathway is mycotoxin biosynthesis. Its function is as follows. Probable cyclase; part of the gene cluster that mediates the biosynthesis of ochratoxin A (OTA), a mycotoxin composed of a chlorinated type I polyketide dihydroisocoumarin moiety linked to L-phenylalanine, and demonstrated to have nephrotoxic, immunotoxic, genotoxic, neurotoxic, and teratogenic properties. OtaY is probably involved in the polyketide cyclization. The pathway begins with the highly reducing polyketide synthase otaA that catalyzes the formation of the isocoumarin group during the initial stages of biosynthesis, starting from one acetate and 4 malonate units, to originate the characteristic pentaketide skeleton 7-methylmellein (7-MM) of the OTA molecule. The newly identified cyclase otaY might be involved in the polyketide cyclization reaction during the initial steps of the OTA biosynthesis. 7-MM is then oxidized into 7-carboxymellein (also called ochratoxin beta) by the cytochrome P450 monooxygenase otaC. The NRPS encoded by the otaB gene is involved in the linking of phenylalanine to the dihydroisocoumarin ring. The reaction catalyzed by NRPS results in the production of ochratoxin B (OTB), which is the non-chlorinated analog of OTA and which subsequently serves as the substrate of the halogenase otaD for chlorination activity to form the final molecular structure of OTA, containing a chlorine atom in the C-5 position of the molecule. The sequence is that of Probable cyclase otaY from Aspergillus niger (strain ATCC MYA-4892 / CBS 513.88 / FGSC A1513).